We begin with the raw amino-acid sequence, 208 residues long: Claudin-like protein ZF-A89 (208 aa).

4 helical membrane-spanning segments follow: residues 8–28, 82–102, 117–137, and 160–180; these read LLATVLAIIGWLGEIVICALP, ALVVISIIVTFMGVFLTIAGG, VVVAAGVFFLVGGILCLIPVC, and LGASLFIGWCASGLLLLGGAL.

Belongs to the claudin family.

Its subcellular location is the cell membrane. It is found in the cell junction. The protein localises to the tight junction. Functionally, component of tight junction (TJ) strands. This Danio rerio (Zebrafish) protein is Claudin-like protein ZF-A89 (cldnd).